A 328-amino-acid polypeptide reads, in one-letter code: Malate dehydrogenase (328 aa).

11-17 (GAAGQIG) contacts NAD(+). Arg92 and Arg98 together coordinate substrate. NAD(+) contacts are provided by residues Asn105, Gln112, and 129–131 (TGN). Substrate contacts are provided by Asn131 and Arg162. His187 serves as the catalytic Proton acceptor.

Belongs to the LDH/MDH superfamily. MDH type 2 family.

The enzyme catalyses (S)-malate + NAD(+) = oxaloacetate + NADH + H(+). In terms of biological role, catalyzes the reversible oxidation of malate to oxaloacetate. The chain is Malate dehydrogenase from Paenarthrobacter aurescens (strain TC1).